An 884-amino-acid chain; its full sequence is Alanine--tRNA ligase (884 aa).

Zn(2+) is bound by residues His-572, His-576, Cys-673, and His-677.

Belongs to the class-II aminoacyl-tRNA synthetase family. The cofactor is Zn(2+).

The protein localises to the cytoplasm. It carries out the reaction tRNA(Ala) + L-alanine + ATP = L-alanyl-tRNA(Ala) + AMP + diphosphate. Catalyzes the attachment of alanine to tRNA(Ala) in a two-step reaction: alanine is first activated by ATP to form Ala-AMP and then transferred to the acceptor end of tRNA(Ala). Also edits incorrectly charged Ser-tRNA(Ala) and Gly-tRNA(Ala) via its editing domain. This is Alanine--tRNA ligase from Xylella fastidiosa (strain 9a5c).